The following is a 409-amino-acid chain: Glucose-1-phosphate adenylyltransferase (409 aa).

Alpha-D-glucose 1-phosphate-binding positions include glycine 168, 183–184 (EK), and serine 201.

It belongs to the bacterial/plant glucose-1-phosphate adenylyltransferase family. In terms of assembly, homotetramer.

The enzyme catalyses alpha-D-glucose 1-phosphate + ATP + H(+) = ADP-alpha-D-glucose + diphosphate. It functions in the pathway glycan biosynthesis; glycogen biosynthesis. Involved in the biosynthesis of ADP-glucose, a building block required for the elongation reactions to produce glycogen. Catalyzes the reaction between ATP and alpha-D-glucose 1-phosphate (G1P) to produce pyrophosphate and ADP-Glc. This Corynebacterium glutamicum (strain R) protein is Glucose-1-phosphate adenylyltransferase.